The following is a 361-amino-acid chain: Lipoyl synthase 1, chloroplastic (361 aa).

7 residues coordinate [4Fe-4S] cluster: C87, C92, C98, C124, C128, C131, and S339. A Radical SAM core domain is found at G107–R328.

Belongs to the radical SAM superfamily. Lipoyl synthase family. Requires [4Fe-4S] cluster as cofactor.

The protein resides in the plastid. It is found in the chloroplast. It catalyses the reaction [[Fe-S] cluster scaffold protein carrying a second [4Fe-4S](2+) cluster] + N(6)-octanoyl-L-lysyl-[protein] + 2 oxidized [2Fe-2S]-[ferredoxin] + 2 S-adenosyl-L-methionine + 4 H(+) = [[Fe-S] cluster scaffold protein] + N(6)-[(R)-dihydrolipoyl]-L-lysyl-[protein] + 4 Fe(3+) + 2 hydrogen sulfide + 2 5'-deoxyadenosine + 2 L-methionine + 2 reduced [2Fe-2S]-[ferredoxin]. It functions in the pathway protein modification; protein lipoylation via endogenous pathway; protein N(6)-(lipoyl)lysine from octanoyl-[acyl-carrier-protein]: step 2/2. Catalyzes the radical-mediated insertion of two sulfur atoms into the C-6 and C-8 positions of the octanoyl moiety bound to the lipoyl domains of lipoate-dependent enzymes, thereby converting the octanoylated domains into lipoylated derivatives. This is Lipoyl synthase 1, chloroplastic from Zea mays (Maize).